A 469-amino-acid chain; its full sequence is Cyclin-dependent kinase 14 (469 aa).

Phosphoserine is present on residues Ser-24, Ser-78, and Ser-95. The segment at 103–133 (FKTSSTGKESPKVRRHSSPSSPTSPKFGKAD) is disordered. The residue at position 134 (Ser-134) is a Phosphoserine. Residues 135-419 (YEKLEKLGEG…AQAALSHEYF (285 aa)) enclose the Protein kinase domain. ATP is bound by residues 141-149 (LGEGSYATV) and Lys-164. Asp-256 functions as the Proton acceptor in the catalytic mechanism. The tract at residues 449–469 (ESMRAFGKNNSYGKSLSNSKH) is disordered. Over residues 456-469 (KNNSYGKSLSNSKH) the composition is skewed to polar residues.

This sequence belongs to the protein kinase superfamily. CMGC Ser/Thr protein kinase family. CDC2/CDKX subfamily. In terms of assembly, found in a complex with LRP6, CCNY and CAPRIN2 during G2/M stage; CAPRIN2 functions as a scaffold for the complex by binding to CCNY via its N terminus and to CDK14 via its C terminus. Interacts with CCNY; CCNY mediates its recruitment to the plasma membrane and promotes phosphorylation of LRP6. Interacts with CCDN3 and CDKN1A. Interacts with SEPT8. Interacts with 14-3-3 proteina YWHAB, YWHAE, YWHAH and YWHAQ. As to expression, highly expressed in brain, pancreas, kidney, heart, testis and ovary. Also detected at lower levels in other tissues except in spleen and thymus where expression is barely detected.

The protein localises to the cell membrane. Its subcellular location is the cytoplasm. It is found in the nucleus. It catalyses the reaction L-seryl-[protein] + ATP = O-phospho-L-seryl-[protein] + ADP + H(+). The catalysed reaction is L-threonyl-[protein] + ATP = O-phospho-L-threonyl-[protein] + ADP + H(+). With respect to regulation, serine/threonine-protein kinase activity is promoted by associated cyclins CCDN3 and CCNY and repressed by CDKN1A. In terms of biological role, serine/threonine-protein kinase involved in the control of the eukaryotic cell cycle, whose activity is controlled by an associated cyclin. Acts as a cell-cycle regulator of Wnt signaling pathway during G2/M phase by mediating the phosphorylation of LRP6 at 'Ser-1490', leading to the activation of the Wnt signaling pathway. Acts as a regulator of cell cycle progression and cell proliferation via its interaction with CCDN3. Phosphorylates RB1 in vitro, however the relevance of such result remains to be confirmed in vivo. May also play a role in meiosis, neuron differentiation and may indirectly act as a negative regulator of insulin-responsive glucose transport. The sequence is that of Cyclin-dependent kinase 14 (CDK14) from Homo sapiens (Human).